The sequence spans 381 residues: Chaperone protein DnaJ (381 aa).

Residues Asp5–Gly70 enclose the J domain. The segment at Gly136–Thr214 adopts a CR-type zinc-finger fold. Zn(2+) is bound by residues Cys149, Cys152, Cys166, Cys169, Cys188, Cys191, Cys202, and Cys205. CXXCXGXG motif repeat units follow at residues Cys149–Gly156, Cys166–Gly173, Cys188–Gly195, and Cys202–Gly209.

The protein belongs to the DnaJ family. Homodimer. It depends on Zn(2+) as a cofactor.

It localises to the cytoplasm. In terms of biological role, participates actively in the response to hyperosmotic and heat shock by preventing the aggregation of stress-denatured proteins and by disaggregating proteins, also in an autonomous, DnaK-independent fashion. Unfolded proteins bind initially to DnaJ; upon interaction with the DnaJ-bound protein, DnaK hydrolyzes its bound ATP, resulting in the formation of a stable complex. GrpE releases ADP from DnaK; ATP binding to DnaK triggers the release of the substrate protein, thus completing the reaction cycle. Several rounds of ATP-dependent interactions between DnaJ, DnaK and GrpE are required for fully efficient folding. Also involved, together with DnaK and GrpE, in the DNA replication of plasmids through activation of initiation proteins. In Vibrio campbellii (strain ATCC BAA-1116), this protein is Chaperone protein DnaJ.